The sequence spans 86 residues: Toxin Aam2 (86 aa).

A signal peptide spans 1–20 (MNYLITISLALLLMTGVASG). The 63-residue stretch at 22–84 (RDGYIADAGN…VPIKVPGKCN (63 aa)) folds into the LCN-type CS-alpha/beta domain. 4 disulfides stabilise this stretch: cysteine 32-cysteine 83, cysteine 36-cysteine 56, cysteine 42-cysteine 66, and cysteine 46-cysteine 68. The residue at position 84 (asparagine 84) is an Asparagine amide.

This sequence belongs to the long (4 C-C) scorpion toxin superfamily. Sodium channel inhibitor family. Alpha subfamily. Expressed by the venom gland.

The protein resides in the secreted. Its function is as follows. Alpha toxins bind voltage-independently at site-3 of sodium channels (Nav) and inhibit the inactivation of the activated channels, thereby blocking neuronal transmission. This Androctonus amoreuxi (African fattail scorpion) protein is Toxin Aam2.